Here is a 198-residue protein sequence, read N- to C-terminus: Rac-like GTP-binding protein ARAC3 (198 aa).

GTP-binding positions include G13–C21, F31–T38, D60–Q64, and T118–D121. The short motif at Y35–F43 is the Effector region element. The S-palmitoyl cysteine moiety is linked to residue C158. C195 carries the post-translational modification Cysteine methyl ester. A lipid anchor (S-geranylgeranyl cysteine) is attached at C195. The propeptide at S196–L198 is removed in mature form.

Belongs to the small GTPase superfamily. Rho family. As to quaternary structure, interacts with Rho GDP-dissociation inhibitor 1 and ICR1. Binds to SPK1 when in the inactive GDP-bound form. As to expression, ubiquitous. Preferentially expressed at the tip of root hairs.

It localises to the cytoplasm. The protein localises to the cell membrane. Inactive GDP-bound Rho GTPases reside in the cytosol, are found in a complex with Rho GDP-dissociation inhibitors (Rho GDIs), and are released from the GDI protein in order to translocate to membranes upon activation. Involved in cell polarity control during the actin-dependent tip growth of root hairs, thus regulating root hair length and root hair initiation. Contributes, in a SPK1-dependent manner, to the prevention of cortical microtubules organization into parallel arrays oriented perpendicular to the axis of cell elongation to limit anisotropic cell growth during petal development. SPK1-dependent activation is required for auxin-mediated inhibition of PIN2 internalization during gravitropic responses. The chain is Rac-like GTP-binding protein ARAC3 from Arabidopsis thaliana (Mouse-ear cress).